An 817-amino-acid polypeptide reads, in one-letter code: Two pore calcium channel protein 1 (817 aa).

The Cytoplasmic segment spans residues methionine 1–tyrosine 101. A disordered region spans residues proline 22 to histidine 66. The helical transmembrane segment at leucine 102 to leucine 122 threads the bilayer. The Extracellular portion of the chain corresponds to leucine 123–arginine 137. Residues threonine 138 to methionine 158 form a helical membrane-spanning segment. At lysine 159–lysine 172 the chain is on the cytoplasmic side. A helical membrane pass occupies residues arginine 173–valine 193. The Extracellular segment spans residues arginine 194–threonine 202. A helical transmembrane segment spans residues arginine 203–arginine 221. Topologically, residues asparagine 222 to aspartate 235 are cytoplasmic. Residues isoleucine 236–serine 256 traverse the membrane as a helical segment. Residues threonine 257 to tyrosine 263 lie on the Extracellular side of the membrane. The segment at residues phenylalanine 264 to methionine 287 is an intramembrane region (helical; Pore-forming). At methionine 288 to cysteine 298 the chain is on the extracellular side. A helical membrane pass occupies residues valine 299 to valine 319. At valine 320–glutamine 445 the chain is on the cytoplasmic side. The helical transmembrane segment at tyrosine 446 to leucine 466 threads the bilayer. Residues lysine 467–tyrosine 480 lie on the Extracellular side of the membrane. The helical transmembrane segment at leucine 481–valine 501 threads the bilayer. At glutamate 502–leucine 504 the chain is on the cytoplasmic side. A helical transmembrane segment spans residues serine 505–threonine 527. Topologically, residues leucine 528 to phenylalanine 535 are extracellular. Residues isoleucine 536–leucine 550 form a helical membrane-spanning segment. Topologically, residues lysine 551–threonine 574 are cytoplasmic. The helical transmembrane segment at leucine 575–serine 595 threads the bilayer. The Extracellular portion of the chain corresponds to proline 596–asparagine 630. The helical; Pore-forming intramembrane region spans phenylalanine 631–methionine 654. Residues glutamate 655 to threonine 671 lie on the Extracellular side of the membrane. Residues phenylalanine 672–valine 692 form a helical membrane-spanning segment. The Cytoplasmic segment spans residues phenylalanine 693–threonine 817. A coiled-coil region spans residues serine 770–leucine 794. Residues histidine 785 to threonine 817 are disordered. A compositionally biased stretch (polar residues) spans alanine 802–threonine 817.

Belongs to the calcium channel alpha-1 subunit (TC 1.A.1.11) family. Two pore calcium channel subfamily. Dimer. Interacts with MTOR; the interaction is required for TPCN1 ATP sensitivity. Interacts with STX7, STX8 and STX12. Interacts with JPT2. Found in a complex with LSM12, TPCN1 and TPCN2. N-glycosylated. In terms of tissue distribution, widely expressed. Expressed at relatively high level in kidney, liver and lung, and in the kidney it is expressed at inner medullary collecting ducts.

The protein resides in the lysosome membrane. It localises to the endosome membrane. The protein localises to the early endosome membrane. Its subcellular location is the recycling endosome membrane. The catalysed reaction is Na(+)(in) = Na(+)(out). The enzyme catalyses Ca(2+)(in) = Ca(2+)(out). Na(+) current is inhibited by ATP in a MTORC-dependent manner. ATP sensitivity is independent of PI(3,5)P2. Probably regulated by Mg(2+) ions, cytosolic Mg(2+) selectively inhibits outward current while lysosomal Mg(2+) modestly inhibits both the outward and inward currents. In the absence of Mg(2+), NAADP readily activates TPCN2, with properties similar to PI(3,5)P2. Both current elicited by PI(3,5)P2 as well as NAADP are inhibited by tetrandrine. Functionally, intracellular channel initially characterized as a non-selective Ca(2+)-permeable channel activated by NAADP (nicotinic acid adenine dinucleotide phosphate), it is also a voltage-gated highly-selective Na(+) channel activated directly by PI(3,5)P2 (phosphatidylinositol 3,5-bisphosphate) that senses pH changes and confers electrical excitability to organelles. Localizes to the early and recycling endosomes membranes where it plays a role in the uptake and processing of proteins and regulates organellar membrane excitability, membrane trafficking and pH homeostasis. Ion selectivity is not fixed but rather agonist-dependent and under defined ionic conditions, can be readily activated by both NAADP and PI(3,5)P2. Required for mTOR-dependent nutrient sensing. This is Two pore calcium channel protein 1 (Tpcn1) from Rattus norvegicus (Rat).